A 246-amino-acid polypeptide reads, in one-letter code: NADH-quinone oxidoreductase subunit C (246 aa).

It belongs to the complex I 30 kDa subunit family. As to quaternary structure, NDH-1 is composed of 14 different subunits. Subunits NuoB, C, D, E, F, and G constitute the peripheral sector of the complex.

The protein localises to the cell inner membrane. The enzyme catalyses a quinone + NADH + 5 H(+)(in) = a quinol + NAD(+) + 4 H(+)(out). NDH-1 shuttles electrons from NADH, via FMN and iron-sulfur (Fe-S) centers, to quinones in the respiratory chain. The immediate electron acceptor for the enzyme in this species is believed to be ubiquinone. Couples the redox reaction to proton translocation (for every two electrons transferred, four hydrogen ions are translocated across the cytoplasmic membrane), and thus conserves the redox energy in a proton gradient. The chain is NADH-quinone oxidoreductase subunit C from Halorhodospira halophila (strain DSM 244 / SL1) (Ectothiorhodospira halophila (strain DSM 244 / SL1)).